Here is an 87-residue protein sequence, read N- to C-terminus: UPF0250 protein PC1_1177 (87 aa).

The protein belongs to the UPF0250 family.

In Pectobacterium carotovorum subsp. carotovorum (strain PC1), this protein is UPF0250 protein PC1_1177.